The following is a 23-amino-acid chain: Apolipophorin-1 (23 aa).

Residues 1-15 show a composition bias toward basic and acidic residues; sequence SVKSEVDNFDKHLKA. Residues 1–23 are disordered; sequence SVKSEVDNFDKHLKAESAPFNNE.

Expressed in hemolymph.

It localises to the secreted. In terms of biological role, constitutes the major component of lipophorin, which mediates transport for various types of lipids in hemolymph. Acts by forming lipoprotein particles that bind lipoproteins and lipids. The sequence is that of Apolipophorin-1 from Galleria mellonella (Greater wax moth).